Here is a 907-residue protein sequence, read N- to C-terminus: Glutamate receptor 1 (907 aa).

The signal sequence occupies residues Met1–Gly18. The Extracellular portion of the chain corresponds to Ala19–Ala536. N-linked (GlcNAc...) asparagine glycans are attached at residues Asn63, Asn249, Asn257, Asn363, Asn401, and Asn406. Cys75 and Cys323 are disulfide-bonded. 3 residues coordinate L-glutamate: Pro492, Thr494, and Arg499. Residues Tyr537–Val557 traverse the membrane as a helical segment. Residues Ser558 to Glu584 are Cytoplasmic-facing. The segment at residues Phe585–Gln600 is an intramembrane region (helical; Pore-forming). Residues Gln601–Cys603 lie within the membrane without spanning it. Cys603 carries S-palmitoyl cysteine lipidation. Residues Asp604–Ser609 lie on the Cytoplasmic side of the membrane. Residues Leu610–Tyr630 form a helical membrane-spanning segment. Residues Thr631–Asn805 lie on the Extracellular side of the membrane. The residue at position 645 (Ser645) is a Phosphoserine. L-glutamate contacts are provided by Ser668 and Thr669. A Phosphoserine; by PKC modification is found at Ser710. Glu719 contacts L-glutamate. Cys732 and Cys787 form a disulfide bridge. Residues Val806–Ile826 form a helical membrane-spanning segment. Over Glu827–Leu907 the chain is Cytoplasmic. The S-palmitoyl cysteine moiety is linked to residue Cys829. Phosphoserine; by PKC, PKA and CAMK2 is present on Ser849. The segment at Ser857–Ser881 is disordered. At Ser863 the chain carries Phosphoserine; by PKC, PKA and PKG/PRKG2. The segment covering Gly866–Glu875 has biased composition (gly residues). Residues Ala904–Leu907 carry the PDZ-binding motif.

The protein belongs to the glutamate-gated ion channel (TC 1.A.10.1) family. GRIA1 subfamily. In terms of assembly, homotetramer or heterotetramer of pore-forming glutamate receptor subunits; heteromeric assembly can be the result of both receptor subtype and flip-flop forms and according the composition, one partner can be dominant with respect to the fast desensitizing current component, whereas the other can determine the steady-state component. Tetramers may be formed by the dimerization of dimers. Found in a complex with GRIA2, GRIA3, GRIA4, CNIH2, CNIH3, CACNG2, CACNG3, CACNG4, CACNG5, CACNG7 and CACNG8. Interacts with HIP1 and RASGRF2. Interacts with SYNDIG1 and GRIA2. Interacts with DLG1 (via C-terminus). Interacts with LRFN1. Interacts with PRKG2. Interacts with CNIH2 and CACNG2. Interacts with CACNG5; this interaction modulates the gating. Interacts (via C-terminus) with PDLIM4 (via LIM domain); this interaction as well as the interaction of PDLIM4 with alpha-actinin is required for their colocalization in early endosomes. Interacts with SNX27 (via PDZ domain); the interaction is required for recycling to the plasma membrane when endocytosed and prevent degradation in lysosomes. Interacts (via PDZ-binding motif) with SHANK3 (via PDZ domain). Interacts with CACNG3; associates GRIA1 with the adapter protein complex 4 (AP-4) to target GRIA1 to the somatodendritic compartment of neurons. Interacts with CACNG2; this interaction mediates traffick to the plasma membrane and modulation of desensitization. Interaction with CNIH2 and CNIH3; this interaction promotes expression at the plasma membrane and extensively modulates their gating properties by slowing deactivation and desensitization kinetics. Found in a complex with GRIA2, GRIA3, GRIA4, DLG4, CACNG8 and CNIH2. Post-translationally, phosphorylated at Ser-645. Phosphorylated at Ser-710 by PKC. Phosphorylated at Ser-849 by PKC, PKA and CAMK2. Phosphorylated at Ser-863 by PKC, PKA and PRKG2. Phosphorylation of Ser-863 is reduced by induction of long-term depression and increased by induction of long-term potentiation. Palmitoylated. Depalmitoylated by CPT1C and upon L-glutamate stimulation. ZDHHC3/GODZ specifically palmitoylates Cys-603, which leads to Golgi retention and decreased cell surface expression. In contrast, Cys-829 palmitoylation does not affect cell surface expression but regulates stimulation-dependent endocytosis. In terms of tissue distribution, detected in cerebellum (at protein level).

It is found in the cell membrane. It localises to the endoplasmic reticulum membrane. Its subcellular location is the postsynaptic cell membrane. The protein resides in the postsynaptic density membrane. The protein localises to the cell projection. It is found in the dendrite. It localises to the dendritic spine. Its subcellular location is the early endosome membrane. The protein resides in the recycling endosome membrane. The protein localises to the presynapse. It is found in the synapse. The enzyme catalyses Ca(2+)(in) = Ca(2+)(out). It catalyses the reaction Na(+)(in) = Na(+)(out). The catalysed reaction is Mg(2+)(in) = Mg(2+)(out). It carries out the reaction Li(+)(in) = Li(+)(out). The enzyme catalyses K(+)(in) = K(+)(out). It catalyses the reaction Sr(2+)(in) = Sr(2+)(out). With respect to regulation, glutamate-gated receptor activity inhibited by DNQX (6,7-dinitroquinoxaline-2,3-dione). Its function is as follows. Ionotropic glutamate receptor that functions as a ligand-gated cation channel, gated by L-glutamate and glutamatergic agonists such as alpha-amino-3-hydroxy-5-methyl-4-isoxazolepropionic acid (AMPA), quisqualic acid, and kainic acid. L-glutamate acts as an excitatory neurotransmitter at many synapses in the central nervous system. Binding of the excitatory neurotransmitter L-glutamate induces a conformation change, leading to the opening of the cation channel, and thereby converts the chemical signal to an electrical impulse upon entry of monovalent and divalent cations such as sodium and calcium. The receptor then desensitizes rapidly and enters in a transient inactive state, characterized by the presence of bound agonist. In the presence of CACNG2 or CACNG4 or CACNG7 or CACNG8, shows resensitization which is characterized by a delayed accumulation of current flux upon continued application of L-glutamate. Resensitization is blocked by CNIH2 through interaction with CACNG8 in the CACNG8-containing AMPA receptors complex. Calcium (Ca(2+)) permeability depends on subunits composition and, heteromeric channels containing edited GRIA2 subunit are calcium-impermeable. Also permeable to other divalents cations such as strontium(2+) and magnesium(2+) and monovalent cations such as potassium(1+) and lithium(1+). The chain is Glutamate receptor 1 from Rattus norvegicus (Rat).